Reading from the N-terminus, the 455-residue chain is Gamma-aminobutyric acid receptor subunit alpha-1 (455 aa).

An N-terminal signal peptide occupies residues 1-27 (MKRLLVLCDCLWAWSLLLNALTERSYG). Residues 28-253 (QTSSQDELKD…FHLKRKIGYF (226 aa)) lie on the Extracellular side of the membrane. Residue Asn38 is glycosylated (N-linked (GlcNAc...) asparagine). Position 94 (Arg94) interacts with 4-aminobutanoate. Asn138 carries N-linked (GlcNAc...) asparagine glycosylation. Thr157 contributes to the 4-aminobutanoate binding site. An intrachain disulfide couples Cys166 to Cys180. The helical transmembrane segment at 254–274 (VIQTYLPCIMTVILSQVSFWL) threads the bilayer. Residues 275-279 (NRESV) are Cytoplasmic-facing. The chain crosses the membrane as a helical span at residues 280-301 (PARTVFGVTTVLTMTTLSISAR). Residues 302–311 (NSLPKVAYAT) lie on the Extracellular side of the membrane. Residues 312–333 (AMDWFIAVCYAFVFSALIEFAT) form a helical membrane-spanning segment. Over 334–420 (VNYFTKRGYA…TFNSVSKIDR (87 aa)) the chain is Cytoplasmic. The helical transmembrane segment at 421-440 (LSRIAFPLLFGIFNLVYWAT) threads the bilayer. At 441-455 (YLNREPQLKAPTPHQ) the chain is on the extracellular side.

The protein belongs to the ligand-gated ion channel (TC 1.A.9) family. Gamma-aminobutyric acid receptor (TC 1.A.9.5) subfamily. GABRA1 sub-subfamily. As to quaternary structure, heteropentamer, formed by a combination of alpha (GABRA1-6), beta (GABRB1-3), gamma (GABRG1-3), delta (GABRD), epsilon (GABRE), rho (GABRR1-3), pi (GABRP) and theta (GABRQ) subunits, each subunit exhibiting distinct physiological and pharmacological properties. As to expression, brain.

The protein localises to the postsynaptic cell membrane. The protein resides in the cell membrane. It carries out the reaction chloride(in) = chloride(out). With respect to regulation, allosterically activated by benzodiazepines, the neuroanesthetic alphaxalone and pentobarbital. Inhibited by the antagonist bicuculline. Potentiated by histamine. In terms of biological role, alpha subunit of the heteropentameric ligand-gated chloride channel gated by gamma-aminobutyric acid (GABA), a major inhibitory neurotransmitter in the brain. GABA-gated chloride channels, also named GABA(A) receptors (GABAAR), consist of five subunits arranged around a central pore and contain GABA active binding site(s) located at the alpha and beta subunit interface(s). When activated by GABA, GABAARs selectively allow the flow of chloride anions across the cell membrane down their electrochemical gradient. Chloride influx into the postsynaptic neuron following GABAAR opening decreases the neuron ability to generate a new action potential, thereby reducing nerve transmission. The GABAARs can also initiate the formation of functional inhibitory GABAergic synapses. GABAARs function also as histamine receptor where histamine binds at the interface of two neighboring beta subunits and potentiates GABA response. The polypeptide is Gamma-aminobutyric acid receptor subunit alpha-1 (GABRA1) (Gallus gallus (Chicken)).